A 598-amino-acid polypeptide reads, in one-letter code: Aspartate--tRNA(Asp/Asn) ligase (598 aa).

Glutamate 170 provides a ligand contact to L-aspartate. An aspartate region spans residues 194–197 (QLFK). Arginine 216 provides a ligand contact to L-aspartate. Residues 216–218 (RDE) and glutamine 225 each bind ATP. Histidine 448 is a binding site for L-aspartate. ATP is bound at residue glutamate 482. Arginine 489 serves as a coordination point for L-aspartate. Residue 534–537 (GWDR) participates in ATP binding. Positions 558 to 598 (GGGVDPLTDAPAPITPQQRKESGIDAKPREDKPKEDAKSKA) are disordered. Positions 575–598 (QRKESGIDAKPREDKPKEDAKSKA) are enriched in basic and acidic residues.

It belongs to the class-II aminoacyl-tRNA synthetase family. Type 1 subfamily. In terms of assembly, homodimer.

It localises to the cytoplasm. It catalyses the reaction tRNA(Asx) + L-aspartate + ATP = L-aspartyl-tRNA(Asx) + AMP + diphosphate. Its function is as follows. Aspartyl-tRNA synthetase with relaxed tRNA specificity since it is able to aspartylate not only its cognate tRNA(Asp) but also tRNA(Asn). Reaction proceeds in two steps: L-aspartate is first activated by ATP to form Asp-AMP and then transferred to the acceptor end of tRNA(Asp/Asn). The protein is Aspartate--tRNA(Asp/Asn) ligase of Mycolicibacterium smegmatis (strain ATCC 700084 / mc(2)155) (Mycobacterium smegmatis).